Here is a 304-residue protein sequence, read N- to C-terminus: Probable aquaporin NIP5-1 (304 aa).

Transmembrane regions (helical) follow at residues 80–100 (LGAE…GPIV) and 106–126 (GAET…IIIL). The NPA 1 signature appears at 137-139 (NPS). Helical transmembrane passes span 157 to 177 (AYIA…KGVF), 195 to 215 (AFAL…AVAT), and 219 to 239 (AVGE…ILVA). The NPA 2 signature appears at 248–250 (NPV). Residues 266–286 (WVYLVAPTLGAISGAAVYTGV) form a helical membrane-spanning segment. Phosphoserine is present on S301.

This sequence belongs to the MIP/aquaporin (TC 1.A.8) family. NIP (TC 1.A.8.12) subfamily. In terms of tissue distribution, expressed in rosette leaves.

It is found in the cell membrane. Functionally, boric acid transporter. Low water transport activity. Plays an important role as plasma membrane boric acid channel for the boron uptake required for plant growth and development under boron limitation. This is Probable aquaporin NIP5-1 (NIP5-1) from Arabidopsis thaliana (Mouse-ear cress).